The chain runs to 386 residues: Aspartate carbamoyltransferase 1, chloroplastic (386 aa).

The N-terminal 39 residues, 1 to 39 (MTVASMLSSNSMNVGVSNPKMSSKTSACCLLNRPWPSSC), are a transit peptide targeting the chloroplast. Carbamoyl phosphate contacts are provided by Arg132 and Thr133. UMP is bound by residues Arg132 and Thr133. Lys162 provides a ligand contact to L-aspartate. Arg183, His211, and Gln214 together coordinate carbamoyl phosphate. Residues Arg183 and His211 each coordinate UMP. UMP contacts are provided by Arg244 and Arg306. L-aspartate contacts are provided by Arg244 and Arg306. Leu346 and Pro347 together coordinate carbamoyl phosphate.

Belongs to the aspartate/ornithine carbamoyltransferase superfamily. ATCase family. In terms of assembly, homotrimer.

It is found in the plastid. The protein resides in the chloroplast. It carries out the reaction carbamoyl phosphate + L-aspartate = N-carbamoyl-L-aspartate + phosphate + H(+). It functions in the pathway pyrimidine metabolism; UMP biosynthesis via de novo pathway; (S)-dihydroorotate from bicarbonate: step 2/3. With respect to regulation, feedback inhibited by UMP. In terms of biological role, catalyzes the condensation of carbamoyl phosphate and aspartate to form carbamoyl aspartate and inorganic phosphate, the committed step in the de novo pyrimidine nucleotide biosynthesis pathway. In Pisum sativum (Garden pea), this protein is Aspartate carbamoyltransferase 1, chloroplastic (PYRB1).